A 371-amino-acid polypeptide reads, in one-letter code: Queuine tRNA-ribosyltransferase (371 aa).

The active-site Proton acceptor is Asp-92. Substrate-binding positions include 92–96, Asp-147, Gln-190, and Gly-217; that span reads DSGGF. The interval 248-254 is RNA binding; sequence GVGKPID. The Nucleophile role is filled by Asp-267. The interval 272-276 is RNA binding; important for wobble base 34 recognition; it reads TRSGR.

The protein belongs to the queuine tRNA-ribosyltransferase family. Homodimer. Within each dimer, one monomer is responsible for RNA recognition and catalysis, while the other monomer binds to the replacement base PreQ1.

It catalyses the reaction 7-aminomethyl-7-carbaguanine + guanosine(34) in tRNA = 7-aminomethyl-7-carbaguanosine(34) in tRNA + guanine. Its pathway is tRNA modification; tRNA-queuosine biosynthesis. In terms of biological role, catalyzes the base-exchange of a guanine (G) residue with the queuine precursor 7-aminomethyl-7-deazaguanine (PreQ1) at position 34 (anticodon wobble position) in tRNAs with GU(N) anticodons (tRNA-Asp, -Asn, -His and -Tyr). Catalysis occurs through a double-displacement mechanism. The nucleophile active site attacks the C1' of nucleotide 34 to detach the guanine base from the RNA, forming a covalent enzyme-RNA intermediate. The proton acceptor active site deprotonates the incoming PreQ1, allowing a nucleophilic attack on the C1' of the ribose to form the product. After dissociation, two additional enzymatic reactions on the tRNA convert PreQ1 to queuine (Q), resulting in the hypermodified nucleoside queuosine (7-(((4,5-cis-dihydroxy-2-cyclopenten-1-yl)amino)methyl)-7-deazaguanosine). This chain is Queuine tRNA-ribosyltransferase, found in Caulobacter vibrioides (strain ATCC 19089 / CIP 103742 / CB 15) (Caulobacter crescentus).